The primary structure comprises 126 residues: Adenosine 5'-monophosphoramidase HINT1 (126 aa).

Ala2 is subject to N-acetylalanine. The HIT domain maps to 18 to 126 (IFGKIIRKEI…GGRQMHWPPG (109 aa)). N6-acetyllysine is present on residues Lys21 and Lys30. Residue 43-44 (DI) coordinates AMP. Residues Ser45 and Ser72 each carry the phosphoserine modification. AMP-binding positions include Asn99, 105-107 (GQS), and 112-114 (HLH). A Histidine triad motif motif is present at residues 110 to 114 (HVHLH). His112 functions as the Tele-AMP-histidine intermediate in the catalytic mechanism.

It belongs to the HINT family. Homodimer. Interacts with CDK7. Interacts with RUVBL1 and RUVBL2 and is associated with the LEF1/TCF1-CTNNB1 complex and with a KAT5 histone acetyltransferase complex. Identified in a complex with MITF and CTNNB1. Interacts with CDC34 and RBX1, and is part of a SCF (SKP2-CUL1-F-box protein) E3 ubiquitin-protein ligase complex. Interacts with SUMO1, SUMO2 and RGS17. Interacts with the Ten-1 ICD form of TENM1. Interacts with CALM1; interaction increases in the presence of calcium ions.

It localises to the cytoplasm. Its subcellular location is the nucleus. It catalyses the reaction adenosine 5'-phosphoramidate + H2O = AMP + NH4(+). Exhibits adenosine 5'-monophosphoramidase activity, hydrolyzing purine nucleotide phosphoramidates with a single phosphate group such as adenosine 5'monophosphoramidate (AMP-NH2) to yield AMP and NH2. Hydrolyzes adenosine 5'monophosphomorpholidate (AMP-morpholidate) and guanosine 5'monophosphomorpholidate (GMP-morpholidate). Hydrolyzes lysyl-AMP (AMP-N-epsilon-(N-alpha-acetyl lysine methyl ester)) generated by lysine tRNA ligase, as well as Met-AMP, His-AMP and Asp-AMP, lysyl-GMP (GMP-N-epsilon-(N-alpha-acetyl lysine methyl ester)) and AMP-N-alanine methyl ester. Can also convert adenosine 5'-O-phosphorothioate and guanosine 5'-O-phosphorothioate to the corresponding nucleoside 5'-O-phosphates with concomitant release of hydrogen sulfide. In addition, functions as a scaffolding protein that modulates transcriptional activation by the LEF1/TCF1-CTNNB1 complex and by the complex formed with MITF and CTNNB1. Modulates p53/TP53 levels and p53/TP53-mediated apoptosis. Modulates proteasomal degradation of target proteins by the SCF (SKP2-CUL1-F-box protein) E3 ubiquitin-protein ligase complex. Also exhibits SUMO-specific isopeptidase activity, deconjugating SUMO1 from RANGAP1 and RGS17. The chain is Adenosine 5'-monophosphoramidase HINT1 (HINT1) from Pongo abelii (Sumatran orangutan).